The primary structure comprises 315 residues: Malate dehydrogenase (315 aa).

Gly-9–Gly-15 contributes to the NAD(+) binding site. Substrate contacts are provided by Arg-84 and Arg-90. NAD(+) contacts are provided by residues Asn-97 and Val-120 to Asn-122. Residues Asn-122 and Arg-153 each coordinate substrate. His-177 (proton acceptor) is an active-site residue.

The protein belongs to the LDH/MDH superfamily.

It carries out the reaction (S)-malate + NAD(+) = oxaloacetate + NADH + H(+). Catalyzes the reversible oxidation of malate to oxaloacetate. The polypeptide is Malate dehydrogenase (Helicobacter hepaticus (strain ATCC 51449 / 3B1)).